Reading from the N-terminus, the 545-residue chain is MATLQGTPVLILKEGTQRTVGRDAQRMNIMAARVIAEAVKSTLGPKGMDKMLVDSLGDVVITNDGVTILKEMDVEHPAAKMIIEVAKTQDNEVGDGTTTAVVLAGELLKKAEELLDQDIHPTVIARGYRMAANKAVEILESIAMDIDVEDEETLKKIAATAITGKHSEYALDHLSSLVVEAVKRVAEKVDDRYKVDEDNIKLEKRQGGSVADTKLVNGIVIDKEVVHPGMPKRVKNAKIAVLKAALEVKETETDAEIRITDPDQLMKFIEQEEKMLKEMVDRLAEAGANVVFCQKGIDDLAQYYLAKAGILAVRRVKQSDIEKIAKACGAKIITDLREITSADLGEAELVEERKVGDEKMVFIEGCKNPKAVTILIRGGSEHVVDEVERSLQDAIKVVKTALESGKVVAGGGAPEIEVALKIRDWAPTLGGREQLAAEAFASALEVIPRALAENSGLDPIDILVELRKAHEEGKTTYGVDVFSGEVACMKERGVLEPLKVKTQAITSATEVAIMILRIDDVIAAKGLEKEKGPEGESGGEEDSEE.

The protein belongs to the TCP-1 chaperonin family. As to quaternary structure, forms a Heterooligomeric complex of two stacked eight-membered rings.

Its function is as follows. Molecular chaperone; binds unfolded polypeptides in vitro, and has a weak ATPase activity. This Archaeoglobus fulgidus (strain ATCC 49558 / DSM 4304 / JCM 9628 / NBRC 100126 / VC-16) protein is Thermosome subunit alpha (thsA).